The primary structure comprises 280 residues: Polyamine aminopropyltransferase (280 aa).

The region spanning 3 to 237 (DVYFMERDPY…YWWSFSVGSK (235 aa)) is the PABS domain. Gln-33 serves as a coordination point for S-methyl-5'-thioadenosine. Spermidine contacts are provided by His-64 and Asp-88. S-methyl-5'-thioadenosine contacts are provided by residues Asp-108 and 139-140 (DG). Asp-157 serves as the catalytic Proton acceptor. Spermidine is bound at residue 157-160 (DSTD).

Belongs to the spermidine/spermine synthase family. In terms of assembly, homodimer or homotetramer.

Its subcellular location is the cytoplasm. It catalyses the reaction S-adenosyl 3-(methylsulfanyl)propylamine + putrescine = S-methyl-5'-thioadenosine + spermidine + H(+). It participates in amine and polyamine biosynthesis; spermidine biosynthesis; spermidine from putrescine: step 1/1. In terms of biological role, catalyzes the irreversible transfer of a propylamine group from the amino donor S-adenosylmethioninamine (decarboxy-AdoMet) to putrescine (1,4-diaminobutane) to yield spermidine. The protein is Polyamine aminopropyltransferase of Hydrogenobaculum sp. (strain Y04AAS1).